A 188-amino-acid chain; its full sequence is uncharacterized protein (188 aa).

This is an uncharacterized protein from Homo sapiens (Human).